Consider the following 441-residue polypeptide: tRNA(Ile)-lysidine synthase (441 aa).

Ser28 to Ser33 provides a ligand contact to ATP.

This sequence belongs to the tRNA(Ile)-lysidine synthase family.

Its subcellular location is the cytoplasm. The catalysed reaction is cytidine(34) in tRNA(Ile2) + L-lysine + ATP = lysidine(34) in tRNA(Ile2) + AMP + diphosphate + H(+). Functionally, ligates lysine onto the cytidine present at position 34 of the AUA codon-specific tRNA(Ile) that contains the anticodon CAU, in an ATP-dependent manner. Cytidine is converted to lysidine, thus changing the amino acid specificity of the tRNA from methionine to isoleucine. In Orientia tsutsugamushi (strain Boryong) (Rickettsia tsutsugamushi), this protein is tRNA(Ile)-lysidine synthase.